The chain runs to 152 residues: AIG2-like protein D (152 aa).

13 to 18 is a binding site for substrate; that stretch reads YGSLMA. Catalysis depends on E81, which acts as the Proton acceptor.

Belongs to the gamma-glutamylcyclotransferase family. As to expression, expressed mainly in leaves.

In terms of biological role, putative gamma-glutamylcyclotransferase. In Arabidopsis thaliana (Mouse-ear cress), this protein is AIG2-like protein D.